The primary structure comprises 122 residues: Large ribosomal subunit protein uL14 (122 aa).

This sequence belongs to the universal ribosomal protein uL14 family. As to quaternary structure, part of the 50S ribosomal subunit. Forms a cluster with proteins L3 and L19. In the 70S ribosome, L14 and L19 interact and together make contacts with the 16S rRNA in bridges B5 and B8.

Its function is as follows. Binds to 23S rRNA. Forms part of two intersubunit bridges in the 70S ribosome. In Mycobacterium leprae (strain TN), this protein is Large ribosomal subunit protein uL14.